The chain runs to 1038 residues: Dorsal-ventral patterning protein Sog (1038 aa).

At 1-53 the chain is on the cytoplasmic side; the sequence is MANKLRKSNAIEWATATGTVPLLERSCCHSEDAALEPQASKTSHREQAPILRH. The chain crosses the membrane as a helical; Signal-anchor for type II membrane protein span at residues 54 to 74; sequence LSQLSHLLIIAGLLIVCLAGV. At 75 to 1038 the chain is on the extracellular side; sequence TEGRRHAPLM…QPHHQQRSSS (964 aa). A VWFC 1 domain is found at 100 to 175; that stretch reads TECQFGKVLR…LPGKCCKTCP (76 aa). 2 N-linked (GlcNAc...) asparagine glycosylation sites follow: N179 and N287. 4 consecutive CHRD domains span residues 197-337, 339-471, 474-588, and 592-713; these read NMKH…KYTA, QTEL…TRAS, IFQT…PRPV, and RDSA…STKV. 4 N-linked (GlcNAc...) asparagine glycosylation sites follow: N520, N666, N752, and N821. The 63-residue stretch at 742 to 804 folds into the VWFC 2 domain; sequence TKCFHSGRFY…RDGECCPSCV (63 aa). VWFC domains lie at 830-899 and 939-1020; these read RGCR…KICP and GGCK…TQCR.

The protein belongs to the chordin family. As to quaternary structure, component of a complex composed of dpp, sog and tsg. Interacts with palmitoyltransferase Hip14. In terms of processing, palmitoylated, probably by Hip14. Cleaved by metalloproteases tok and tld. Cleavage by tok during pupal development contributes to specification of the posterior crossvein in the wing. As to expression, abuts the dorsal dpp-expressing cells in a lateral stripe 14-16 cells wide. Later in embryogenesis it is expressed in neuroectoderm and in the endoderm spaced along the anterior-posterior axis of the developing gut.

It is found in the golgi apparatus membrane. The protein localises to the cell membrane. The protein resides in the secreted. Putative negative growth factor. Antagonist of dpp, a protein involved in patterning the dorsal region and in the development of the neuroectoderm; dpp inhibition is enhanced by tsg. Required for establishment of a narrow stripe of peak levels of BMP signaling in the dorsal midline of early embryos, that will give rise to the amnioserosa. During pupal development, plays a role in specification of the posterior crossvein in the wing. Exhibits both agonist and antagonist activities towards BMP signaling during pupal wing patterning. The polypeptide is Dorsal-ventral patterning protein Sog (sog) (Drosophila melanogaster (Fruit fly)).